The chain runs to 144 residues: Large ribosomal subunit protein uL13 (144 aa).

The protein belongs to the universal ribosomal protein uL13 family. Part of the 50S ribosomal subunit.

Functionally, this protein is one of the early assembly proteins of the 50S ribosomal subunit, although it is not seen to bind rRNA by itself. It is important during the early stages of 50S assembly. This chain is Large ribosomal subunit protein uL13, found in Natronomonas pharaonis (strain ATCC 35678 / DSM 2160 / CIP 103997 / JCM 8858 / NBRC 14720 / NCIMB 2260 / Gabara) (Halobacterium pharaonis).